A 220-amino-acid chain; its full sequence is Ribosome maturation factor RimM (220 aa).

The PRC barrel domain occupies 143-220 (EGEFYWVDLI…RIVVDWGLDY (78 aa)).

It belongs to the RimM family. As to quaternary structure, binds ribosomal protein uS19.

It localises to the cytoplasm. An accessory protein needed during the final step in the assembly of 30S ribosomal subunit, possibly for assembly of the head region. Essential for efficient processing of 16S rRNA. May be needed both before and after RbfA during the maturation of 16S rRNA. It has affinity for free ribosomal 30S subunits but not for 70S ribosomes. In Cupriavidus metallidurans (strain ATCC 43123 / DSM 2839 / NBRC 102507 / CH34) (Ralstonia metallidurans), this protein is Ribosome maturation factor RimM.